We begin with the raw amino-acid sequence, 735 residues long: 1,4-alpha-glucan branching enzyme GlgB 1 (735 aa).

The Nucleophile role is filled by D418. E471 (proton donor) is an active-site residue.

Belongs to the glycosyl hydrolase 13 family. GlgB subfamily. As to quaternary structure, monomer.

The enzyme catalyses Transfers a segment of a (1-&gt;4)-alpha-D-glucan chain to a primary hydroxy group in a similar glucan chain.. It functions in the pathway glycan biosynthesis; glycogen biosynthesis. In terms of biological role, catalyzes the formation of the alpha-1,6-glucosidic linkages in glycogen by scission of a 1,4-alpha-linked oligosaccharide from growing alpha-1,4-glucan chains and the subsequent attachment of the oligosaccharide to the alpha-1,6 position. The sequence is that of 1,4-alpha-glucan branching enzyme GlgB 1 from Rhizobium etli (strain ATCC 51251 / DSM 11541 / JCM 21823 / NBRC 15573 / CFN 42).